Here is a 604-residue protein sequence, read N- to C-terminus: Aspartate--tRNA(Asp/Asn) ligase (604 aa).

Glu-187 provides a ligand contact to L-aspartate. An aspartate region spans residues 211 to 214 (QQFK). Arg-233 and His-461 together coordinate L-aspartate. 233-235 (RDE) provides a ligand contact to ATP. Glu-495 is a binding site for ATP. Arg-502 provides a ligand contact to L-aspartate. Residue 547-550 (GLDR) participates in ATP binding.

The protein belongs to the class-II aminoacyl-tRNA synthetase family. Type 1 subfamily. In terms of assembly, homodimer.

Its subcellular location is the cytoplasm. The enzyme catalyses tRNA(Asx) + L-aspartate + ATP = L-aspartyl-tRNA(Asx) + AMP + diphosphate. Functionally, aspartyl-tRNA synthetase with relaxed tRNA specificity since it is able to aspartylate not only its cognate tRNA(Asp) but also tRNA(Asn). Reaction proceeds in two steps: L-aspartate is first activated by ATP to form Asp-AMP and then transferred to the acceptor end of tRNA(Asp/Asn). The sequence is that of Aspartate--tRNA(Asp/Asn) ligase from Chlorobium luteolum (strain DSM 273 / BCRC 81028 / 2530) (Pelodictyon luteolum).